The chain runs to 870 residues: MYDKNLEKEYYQICEERGYFEIDGNKTIQEKDKNFCIMMPPPNVTGVLHIGHALTFTLQDIMTRYKRMDGYKVLYQPGLDHAGIATQNVVEKQLLAQGIKKEELGREEFIEKVWEWKEQSGGKILDQMRTLGITPAWSRLRFTMDEGLVNAVKKAFVELYDKRLIVRGNYMINWCTHDGALSDIEVEYKENKGKLYHIKYFLKDSDEFLVVATTRPETFFGDTAVMVHPDDERYAKFVDKEVILPISKKAIKIIADEHVEKEFGTGVVKVTPAHDMNDYEVGLRHNLDFISVFDEKGILNEHCLEFQGLERLEAREKIVAKLESLGFIEKIEEYNNQIGYCYRCNNIVEPYISKQWFVKKEIAQESIEKVALGESKFYPNHWINSFNAWMKDLRDWCISRQLWWGHQIPVYYCECSHEWASQHTPKTCPKCQSQNFKQDEDVLDTWFSSGLWAMSTLGWGNENWGKDKIWSEKDLKDFYPNSLLITGFDILFFWVARMMFQSTNVLHQLPFKDIYLHALVKDEQGRKMSKSLGNVIDPNESIKEYSADILRFTLALLAIQGRDIKLSNDKLLQVRNFTNKIYNAKNYLLLNESKFEDLENITLHSELAKYIYAKFQTCVKDVRENLDNYRFNDAANTLYKFFWDDFCDWGIELSKAEKSSVKELGSIFKEALKLLNPFMPFISEYLYHKLSDTELKTSPSIMISKYPKFKEQDKNIEKIFSLLIESIVSIRRAKSLIDLGNSKIEKAYIKFNDKKIKDEIKAYMNFIIMLAKCEQIEFSEEKLPKAICDVSENLEIFITLENVDLSGILTRLENQKNKLEKESFKLNSMLSNEKFIANAPKEVVEQNKEALENLKIQLEKISVELQNLRG.

Positions 42 to 52 match the 'HIGH' region motif; it reads PNVTGVLHIGH. The short motif at 527–531 is the 'KMSKS' region element; it reads KMSKS. Residue Lys530 participates in ATP binding. Positions 800–870 form a coiled coil; it reads LENVDLSGIL…ISVELQNLRG (71 aa).

The protein belongs to the class-I aminoacyl-tRNA synthetase family. ValS type 1 subfamily. In terms of assembly, monomer.

The protein localises to the cytoplasm. It catalyses the reaction tRNA(Val) + L-valine + ATP = L-valyl-tRNA(Val) + AMP + diphosphate. In terms of biological role, catalyzes the attachment of valine to tRNA(Val). As ValRS can inadvertently accommodate and process structurally similar amino acids such as threonine, to avoid such errors, it has a 'posttransfer' editing activity that hydrolyzes mischarged Thr-tRNA(Val) in a tRNA-dependent manner. This chain is Valine--tRNA ligase, found in Campylobacter jejuni (strain RM1221).